Consider the following 235-residue polypeptide: Hydroxyacylglutathione hydrolase (235 aa).

The Zn(2+) site is built by His-53, His-55, Asp-57, His-58, His-109, Asp-127, and His-165.

It belongs to the metallo-beta-lactamase superfamily. Glyoxalase II family. Monomer. Zn(2+) serves as cofactor.

The catalysed reaction is an S-(2-hydroxyacyl)glutathione + H2O = a 2-hydroxy carboxylate + glutathione + H(+). The protein operates within secondary metabolite metabolism; methylglyoxal degradation; (R)-lactate from methylglyoxal: step 2/2. In terms of biological role, thiolesterase that catalyzes the hydrolysis of S-D-lactoyl-glutathione to form glutathione and D-lactic acid. This is Hydroxyacylglutathione hydrolase from Actinobacillus pleuropneumoniae serotype 5b (strain L20).